A 294-amino-acid chain; its full sequence is Dof zinc finger protein DOF4.1 (294 aa).

The Dof-type zinc finger occupies 68–122 (RNCPRCNSSNTKFCYYNNYSLAQPRYLCKSCRRYWTEGGSLRNVPVGGGSRKNKK). Zn(2+)-binding residues include Cys70, Cys73, Cys95, and Cys98. 2 disordered regions span residues 109–178 (RNVP…DKRA) and 247–294 (MYPY…GPTW). Composition is skewed to polar residues over residues 126–136 (PNSSTSSSTKN) and 157–173 (KTHQ…SSPM). The span at 251 to 273 (GDHEDRQQHHHVRHDDGNKKREG) shows a compositional bias: basic and acidic residues. Residues 284-294 (ILGGDSGGPTW) are compositionally biased toward gly residues.

It localises to the nucleus. In terms of biological role, transcription factor that binds specifically to a 5'-AA[AG]G-3' consensus core sequence. This chain is Dof zinc finger protein DOF4.1 (DOF4.1), found in Arabidopsis thaliana (Mouse-ear cress).